The following is a 264-amino-acid chain: Phosphonoacetaldehyde hydrolase (264 aa).

The active-site Nucleophile is the D9. Mg(2+) contacts are provided by D9 and A11. K50 (schiff-base intermediate with substrate) is an active-site residue. Residue D183 coordinates Mg(2+).

It belongs to the HAD-like hydrolase superfamily. PhnX family. In terms of assembly, homodimer. Mg(2+) is required as a cofactor.

The catalysed reaction is phosphonoacetaldehyde + H2O = acetaldehyde + phosphate + H(+). Functionally, involved in phosphonate degradation. In Bacillus thuringiensis (strain Al Hakam), this protein is Phosphonoacetaldehyde hydrolase.